The following is a 688-amino-acid chain: Elongation factor G (688 aa).

The tr-type G domain occupies 8–282 (DKFRNFGIMA…GVVDYLPSPL (275 aa)). Residues 17 to 24 (AHIDAGKT), 81 to 85 (DTPGH), and 135 to 138 (NKMD) each bind GTP.

Belongs to the TRAFAC class translation factor GTPase superfamily. Classic translation factor GTPase family. EF-G/EF-2 subfamily.

The protein localises to the cytoplasm. Functionally, catalyzes the GTP-dependent ribosomal translocation step during translation elongation. During this step, the ribosome changes from the pre-translocational (PRE) to the post-translocational (POST) state as the newly formed A-site-bound peptidyl-tRNA and P-site-bound deacylated tRNA move to the P and E sites, respectively. Catalyzes the coordinated movement of the two tRNA molecules, the mRNA and conformational changes in the ribosome. This is Elongation factor G from Clostridium beijerinckii (strain ATCC 51743 / NCIMB 8052) (Clostridium acetobutylicum).